A 489-amino-acid chain; its full sequence is uncharacterized protein (489 aa).

The next 11 membrane-spanning stretches (helical) occupy residues 29 to 49, 67 to 87, 90 to 110, 119 to 139, 152 to 172, 186 to 206, 276 to 296, 308 to 328, 351 to 371, 397 to 417, and 418 to 438; these read FIASCILFCCPGIYLAVTGLG, LLYALFTVCGWAGGPILKYLG, WALALGATGYPIYIGGLWYFD, IFTGAYEGIAAGLLWASTAYI, FIATQWTILAFGSTVGSFIAF, AVYIIFIIIMACAVLLAILFI, LNNVLFWVIQFFVPYLFTLIL, IIGLTIQAVVIMATLSGELGW, GGALVLYLLMGIQYGSSIVSV, AAGMCVSFGIDAAGVSFLGQG, and IIYFIFLFVMCASQLIMTSIF.

It localises to the membrane. This is an uncharacterized protein from Schizosaccharomyces pombe (strain 972 / ATCC 24843) (Fission yeast).